The sequence spans 123 residues: Alpha-lactalbumin (123 aa).

The region spanning 1–123 (KQFTKCELSQ…KLEQWLCEKE (123 aa)) is the C-type lysozyme domain. Intrachain disulfides connect Cys-6-Cys-120, Cys-28-Cys-111, Cys-61-Cys-77, and Cys-73-Cys-91. An N-linked (GlcNAc...) asparagine glycan is attached at Asn-45. Positions 79, 82, 84, 87, and 88 each coordinate Ca(2+).

It belongs to the glycosyl hydrolase 22 family. As to quaternary structure, lactose synthase (LS) is a heterodimer of a catalytic component, beta1,4-galactosyltransferase (beta4Gal-T1) and a regulatory component, alpha-lactalbumin (LA). Mammary gland specific. Secreted in milk.

It is found in the secreted. In terms of biological role, regulatory subunit of lactose synthase, changes the substrate specificity of galactosyltransferase in the mammary gland making glucose a good acceptor substrate for this enzyme. This enables LS to synthesize lactose, the major carbohydrate component of milk. In other tissues, galactosyltransferase transfers galactose onto the N-acetylglucosamine of the oligosaccharide chains in glycoproteins. The chain is Alpha-lactalbumin (LALBA) from Papio cynocephalus (Yellow baboon).